Reading from the N-terminus, the 275-residue chain is Membrane protein insertase YidC 1 (275 aa).

The signal sequence occupies residues 1–25 (MRKVLRVKKNIKIARIVPLVLLLVA). Residue Cys26 is the site of N-palmitoyl cysteine attachment. A lipid anchor (S-diacylglycerol cysteine) is attached at Cys26. The next 5 helical transmembrane spans lie at 58 to 78 (SIGV…MPLF), 129 to 149 (YASL…FQAL), 171 to 191 (LYLL…LTNL), 198 to 216 (VMMT…FMGF), and 222 to 240 (VVLY…LLLL).

The protein belongs to the OXA1/ALB3/YidC family. Type 2 subfamily.

Its subcellular location is the cell membrane. Functionally, required for the insertion and/or proper folding and/or complex formation of integral membrane proteins into the membrane. Involved in integration of membrane proteins that insert both dependently and independently of the Sec translocase complex, as well as at least some lipoproteins. The chain is Membrane protein insertase YidC 1 from Streptococcus pyogenes serotype M6 (strain ATCC BAA-946 / MGAS10394).